A 245-amino-acid polypeptide reads, in one-letter code: MKIDYLTLFPEMFDGVLNHSIMKRAQENNKLQINTVNFRDYAINKHNQVDDYPYGGGQGMVLKPEPVFNAMEDLDVTEQTRVILMCPQGEPFSHQKAVELSKADHIVFICGHYEGYDERIRTHLVTDEISMGDYVLTGGELPAMTMTDAIVRLIPGVLGNEQSHQDDSFSDGLLEFPQYTRPREFKGLTVPDVLLSGNHANIDAWRHEQKLIRTYNKRPDLIEKYPLTNEDKQILERYKIGLKKG.

Residues Gly111 and Met131–Leu136 each bind S-adenosyl-L-methionine.

This sequence belongs to the RNA methyltransferase TrmD family. As to quaternary structure, homodimer.

The protein resides in the cytoplasm. It carries out the reaction guanosine(37) in tRNA + S-adenosyl-L-methionine = N(1)-methylguanosine(37) in tRNA + S-adenosyl-L-homocysteine + H(+). Its function is as follows. Specifically methylates guanosine-37 in various tRNAs. This chain is tRNA (guanine-N(1)-)-methyltransferase, found in Staphylococcus aureus (strain Mu3 / ATCC 700698).